A 100-amino-acid chain; its full sequence is Toxin ParE3 (100 aa).

It belongs to the RelE toxin family.

Functionally, toxic component of a type II toxin-antitoxin (TA) system. Its toxic effect is neutralized by coexpression with cognate antitoxin ParD3 but no other ParD or RelB antitoxin. This chain is Toxin ParE3 (parE3), found in Caulobacter vibrioides (strain ATCC 19089 / CIP 103742 / CB 15) (Caulobacter crescentus).